The chain runs to 359 residues: DNA replication and repair protein RecF (359 aa).

30–37 (GPNAKGKT) contributes to the ATP binding site.

Belongs to the RecF family.

It localises to the cytoplasm. The RecF protein is involved in DNA metabolism; it is required for DNA replication and normal SOS inducibility. RecF binds preferentially to single-stranded, linear DNA. It also seems to bind ATP. The protein is DNA replication and repair protein RecF of Protochlamydia amoebophila (strain UWE25).